We begin with the raw amino-acid sequence, 262 residues long: Indole-3-glycerol phosphate synthase (262 aa).

It belongs to the TrpC family.

The enzyme catalyses 1-(2-carboxyphenylamino)-1-deoxy-D-ribulose 5-phosphate + H(+) = (1S,2R)-1-C-(indol-3-yl)glycerol 3-phosphate + CO2 + H2O. It functions in the pathway amino-acid biosynthesis; L-tryptophan biosynthesis; L-tryptophan from chorismate: step 4/5. This Leptothrix cholodnii (strain ATCC 51168 / LMG 8142 / SP-6) (Leptothrix discophora (strain SP-6)) protein is Indole-3-glycerol phosphate synthase.